The chain runs to 233 residues: MKLLLLLALLLGAVSTRHLKVDTSSLQSLRGEESLAQDGETAEGATREATAGALMPLPEEEEMEGASGSEDDPEEEEEEEEEVEFSSELDVSPEDIQCPKEEDTVKFFSRPGYKTRGYVMVGSARTFNEAQWVCQRCYRGNLASIHSFAFNYQVQCTSAGLNVAQVWIGGQLRGKGRCRRFVWVDRTVWNFAYWARGQPWGGRQRGRCVTLCARGGHWRRSHCGKRRPFVCTY.

A signal peptide spans 1 to 15 (MKLLLLLALLLGAVS). Positions 16 to 114 (TRHLKVDTSS…VKFFSRPGYK (99 aa)) are cleaved as a propeptide — acidic. Residues 24–96 (SSLQSLRGEE…SELDVSPEDI (73 aa)) are disordered. Low complexity predominate over residues 42-57 (AEGATREATAGALMPL). Positions 58–93 (PEEEEMEGASGSEDDPEEEEEEEEEVEFSSELDVSP) are enriched in acidic residues. Residues 132-233 (WVCQRCYRGN…GKRRPFVCTY (102 aa)) form the C-type lectin domain. 2 cysteine pairs are disulfide-bonded: Cys-134/Cys-231 and Cys-208/Cys-223.

Post-translationally, nitrated.

The protein localises to the cytoplasmic granule. Its function is as follows. MBP may play some important roles in the allergic reactions and inflammations, since MBP is capable of releasing histamine from mast cells and damaging the epithelial cells of bronchial tubes. Antiparasitic and antibiotic. In Cavia porcellus (Guinea pig), this protein is Eosinophil granule major basic protein 1 (MBP1).